Consider the following 386-residue polypeptide: Chaperone protein DnaJ (386 aa).

Residues D5–G70 form the J domain. Residues G138–E216 form a CR-type zinc finger. 8 residues coordinate Zn(2+): C151, C154, C168, C171, C190, C193, C204, and C207. CXXCXGXG motif repeat units lie at residues C151–G158, C168–G175, C190–G197, and C204–G211.

Belongs to the DnaJ family. Homodimer. Zn(2+) serves as cofactor.

The protein localises to the cytoplasm. Its function is as follows. Participates actively in the response to hyperosmotic and heat shock by preventing the aggregation of stress-denatured proteins and by disaggregating proteins, also in an autonomous, DnaK-independent fashion. Unfolded proteins bind initially to DnaJ; upon interaction with the DnaJ-bound protein, DnaK hydrolyzes its bound ATP, resulting in the formation of a stable complex. GrpE releases ADP from DnaK; ATP binding to DnaK triggers the release of the substrate protein, thus completing the reaction cycle. Several rounds of ATP-dependent interactions between DnaJ, DnaK and GrpE are required for fully efficient folding. Also involved, together with DnaK and GrpE, in the DNA replication of plasmids through activation of initiation proteins. This chain is Chaperone protein DnaJ, found in Hyphomonas neptunium (strain ATCC 15444).